The chain runs to 546 residues: Probable ATP-dependent RNA helicase DDX56 (546 aa).

The Q motif motif lies at 7–35 (LGFEHMGLDHRLLQAVTDLGWSRPTLIQE). A Helicase ATP-binding domain is found at 38–218 (IPLALEGKDL…ELVLHNPVTL (181 aa)). 51–58 (ARTGSGKT) contributes to the ATP binding site. Ser126 is subject to Phosphoserine. Thr141 carries the post-translational modification Phosphothreonine. The DEAD box signature appears at 166–169 (DEAD). One can recognise a Helicase C-terminal domain in the interval 230–424 (QLQQFQVVCE…PYQFHMEEIE (195 aa)). Disordered stretches follow at residues 323-342 (PVKG…SDPE) and 504-546 (LVHP…AAPS). Basic residues predominate over residues 505 to 524 (VHPHKKRKKPLASKKAKKAK). At Ser531 the chain carries Phosphoserine.

It belongs to the DEAD box helicase family. DDX56/DBP9 subfamily. May form homooligomeric complexes. Interacts with IRF3. Interacts with OCT4 and POU5F1.

Its subcellular location is the nucleus. It localises to the nucleolus. It carries out the reaction ATP + H2O = ADP + phosphate + H(+). Its function is as follows. Nucleolar RNA helicase that plays a role in various biological processes including innate immunity, ribosome biogenesis or nucleolus organization. Plays an essential role in maintaining nucleolar integrity in planarian stem cells. Maintains embryonic stem cells proliferation by conventional regulation of ribosome assembly and interaction with OCT4 and POU5F1 complex. Regulates antiviral innate immunity by inhibiting the virus-triggered signaling nuclear translocation of IRF3. Mechanistically, acts by disrupting the interaction between IRF3 and importin IPO5. May play a role in later stages of the processing of the pre-ribosomal particles leading to mature 60S ribosomal subunits. Has intrinsic ATPase activity. The sequence is that of Probable ATP-dependent RNA helicase DDX56 (DDX56) from Bos taurus (Bovine).